A 146-amino-acid chain; its full sequence is Hemoglobin subunit beta-1/2 (146 aa).

Val-1 carries the post-translational modification N-acetylvaline. The Globin domain occupies 2-146; that stretch reads HLTGEEKSGL…VANALAHKYH (145 aa). Thr-12 bears the Phosphothreonine mark. Position 59 is an N6-acetyllysine (Lys-59). A heme b-binding site is contributed by His-63. Lys-82 bears the N6-acetyllysine mark. His-92 contributes to the heme b binding site. S-nitrosocysteine is present on Cys-93. Lys-144 carries the post-translational modification N6-acetyllysine.

The protein belongs to the globin family. Heterotetramer of two alpha chains and two beta chains. Red blood cells.

In terms of biological role, involved in oxygen transport from the lung to the various peripheral tissues. This Physeter macrocephalus (Sperm whale) protein is Hemoglobin subunit beta-1/2 (HBB).